Here is a 382-residue protein sequence, read N- to C-terminus: MKALHFGAGNIGRGFIGKLLADAGIQLTFADVNQVVLDALNARHSYQVHVVGETEQVDTVSGVDAVSSIGDDVVDLIAQVDLVTTAVGPVVLERIAPAIAKGLVKRKEQGNESPLNIIACENMVRGTTQLKGHVMNALPEDAKAWVEEHVGFVDSAVDRIVPPSASATNDPLEVTVETFSEWIVDKTQFKGTLPNIPGMELTDNLMAFVERKLFTLNTGHAITAYLGKLAGHQTIRDAILDEKIRAVVKGAMEESGAVLIKRYGFDADKHAAYIQKILGRFENPYLKDDVERVGRQPLRKLSAGDRLIKPLLGTLEYGLPHKNLIEGIAAAMHFRSEDDPQAQELAALIADKGPQAALAQISGLDANNEVVSEAVTAYKAMQ.

Position 3–14 (3–14 (ALHFGAGNIGRG)) interacts with NAD(+). The residue at position 269 (K269) is an N6-acetyllysine.

This sequence belongs to the mannitol dehydrogenase family.

The catalysed reaction is D-mannitol 1-phosphate + NAD(+) = beta-D-fructose 6-phosphate + NADH + H(+). This is Mannitol-1-phosphate 5-dehydrogenase from Escherichia coli O127:H6 (strain E2348/69 / EPEC).